The chain runs to 990 residues: Fibronectin-binding protein A (990 aa).

The signal sequence occupies residues 1 to 35 (MKNNLRYGIRKHKLGAASVFLGTMIVVGMGQDKEA). The YSIRK-G/S signaling motif signature appears at 7 to 18 (YGIRKHKLGAAS). 2 disordered regions span residues 33 to 61 (KEAA…SETQ) and 96 to 193 (PKAV…TEVK). Residues 37–55 (TSEQKTTTVEENGNSATDN) show a composition bias toward polar residues. Positions 37–511 (TSEQKTTTVE…SNKADGNGKN (475 aa)) are ligand-binding A region. Composition is skewed to basic and acidic residues over residues 112–126 (TVKE…KPQV) and 179–193 (DVAE…TEVK). The interval 194-511 (GTDVTSKVTV…SNKADGNGKN (318 aa)) is fibrinogen/elastin/tropoelastin-binding. Residues 512-834 (GQIIQNNDFE…EGQQTIEEDT (323 aa)) form a fibronectin-binding region. The stretch at 545-574 (ENQDNTPLDIDYHTAIDGEGGYADGYIETI) is one B-1 repeat. Positions 545–604 (ENQDNTPLDIDYHTAIDGEGGYADGYIETIEETDSSAIDIDYHTAVDSEAGHVGGYTESS) are 2 X approximate tandem repeats. The stretch at 575-604 (EETDSSAIDIDYHTAVDSEAGHVGGYTESS) is one B-2 repeat. The interval 702 to 969 (LGYEGGQNSG…EESTNKGMLF (268 aa)) is disordered. The stretch at 707–744 (GQNSGNQSFEEDTEEDKPKYEQGGNIVDIDFDSVPQIQ) is one D-1 repeat. The interval 707-850 (GQNSGNQSFE…TPEVPSEPET (144 aa)) is 4 X approximate tandem repeats. Residues 741–752 (PQIQGQNNGNQS) are compositionally biased toward polar residues. The D-2 repeat unit spans residues 745-782 (GQNNGNQSFEEDTEKDKPKYEQGGNIIDIDFDSVPQIH). The D-3 repeat unit spans residues 783 to 821 (GFNKHNEIIEEDTNKDKPNYQFGGHNSVDFEEDTLPKVS). A compositionally biased stretch (basic and acidic residues) spans 786–800 (KHNEIIEEDTNKDKP). The stretch at 822–850 (GQNEGQQTIEEDTTPPTPPTPEVPSEPET) is one D-4; truncated repeat. Over residues 836-910 (PPTPPTPEVP…PAEPGKPVPP (75 aa)) the composition is skewed to pro residues. 5 WR repeats span residues 851–864 (PTPP…EPET), 865–878 (PTPP…EPET), 879–892 (PTPP…EPET), 893–906 (PTPP…EPGK), and 907–920 (PVPP…KPSK). Residues 851 to 920 (PTPPTPEVPS…AEEEPKKPSK (70 aa)) form a 5 X tandem repeats, Pro-rich (WR) region. The LPXTG sorting signal signature appears at 954-958 (LPETG). T957 carries the pentaglycyl murein peptidoglycan amidated threonine modification. The propeptide at 958–990 (GGEESTNKGMLFGGLFSILGLALLRRNKKNHKA) is removed by sortase.

The protein localises to the secreted. The protein resides in the cell wall. Promotes bacterial attachment to multiple substrates, such as fibronectin (Fn), fibrinogen (Fg), elastin peptides and tropoelastin. This confers to S.aureus the ability to invade endothelial cells. Promotes adherence to and aggregation of activated platelets. The sequence is that of Fibronectin-binding protein A (fnbA) from Staphylococcus aureus (strain bovine RF122 / ET3-1).